The primary structure comprises 524 residues: Cytokinin dehydrogenase 7 (524 aa).

One can recognise an FAD-binding PCMH-type domain in the interval 58 to 238 (NCVKPLAVVR…TRARVLLQPA (181 aa)). FAD-binding residues include Ala91, Gly93, Asn94, and Gly95. His96 carries the pros-8alpha-FAD histidine modification. The FAD site is built by Ser97, Gln101, Asp162, Thr167, Ser173, Val177, Ile228, Tyr479, Ser514, and Gln517.

The protein belongs to the oxygen-dependent FAD-linked oxidoreductase family. The cofactor is FAD. Expressed in the vasculature of roots, hypocotyls, cotyledons and leaves of young seedlings. In flowers, expressed in the transmitting tissue of the gynoecium prior to pollination. Expressed in the mature embryo sac with maximum activity in the egg cell and the synergids.

Its subcellular location is the cytoplasm. It localises to the cytosol. It catalyses the reaction N(6)-dimethylallyladenine + A + H2O = 3-methyl-2-butenal + adenine + AH2. Catalyzes the oxidation of cytokinins, a family of N(6)-substituted adenine derivatives that are plant hormones, where the substituent is an isopentenyl group. Catalyzes in vitro the oxidation of various types of cytokinin nucleotides that are known as direct products of cytokinin biosynthesis. This is Cytokinin dehydrogenase 7 (CKX7) from Arabidopsis thaliana (Mouse-ear cress).